We begin with the raw amino-acid sequence, 713 residues long: MFNKHSVEIEWAGRPLKLETGKVARQADGAVIATYGETMVLATVVSAKSPKPGQDFFPLTVNYQEKTYAAGKIPGGYFKREGRPSEKETLVSRLIDRPIRPLFPEGYKNDTQVVVTVIQHDLENDPDVLSMVAASAALTLSGIPFMGPVGGARVGYINGEYVLNPHLDEMDESVLDLVVAGTQDAVLMVESEAKELNEEIMLGAVMFGHKGFQPVIDAIIKLAEVAAKEPREFEPEDFSALENEMLGLAETELRTAYKITEKAARYAAVDAVKTKVKAHFLPEEGEAKYSPEEIGAVFKHLQAKIVRWNVLDTKSRIDGRDLSTVRPIVSEVGILPRTHGSALFTRGETQAIVVATLGTGEDEQYVDSLTGMYKERFLLHYNFPPYSVGETGRMGSPGRREIGHGKLAWRAIRPMLPTAEQFPYTLRVVSEITESNGSSSMATVCGTSLALMDAGVPLAKPVAGIAMGLILEGERFAVLSDILGDEDHLGDMDFKVAGTADGITSLQMDIKIAGITEEIMKIALEQAQGGRKHILGEMANAITESRGQLGEFAPRIEVMNIPVDKIREVIGSGGKVIREIVEKTGAKINIEDDGTVKIASASGKEIEAARKWIHSIVAEPEVGQIYEGTVVKTADFGAFVNFFGARDGLVHISQLASERVAKTSDVVKEGDKVWVKLMGFDERGKVRLSMKVVDQATGKEVAADKKDGEAAAE.

Mg(2+) is bound by residues Asp-487 and Asp-493. The KH domain maps to 554-613 (PRIEVMNIPVDKIREVIGSGGKVIREIVEKTGAKINIEDDGTVKIASASGKEIEAARKWI). Residues 623-691 (GQIYEGTVVK…ERGKVRLSMK (69 aa)) form the S1 motif domain.

It belongs to the polyribonucleotide nucleotidyltransferase family. Requires Mg(2+) as cofactor.

Its subcellular location is the cytoplasm. The catalysed reaction is RNA(n+1) + phosphate = RNA(n) + a ribonucleoside 5'-diphosphate. Functionally, involved in mRNA degradation. Catalyzes the phosphorolysis of single-stranded polyribonucleotides processively in the 3'- to 5'-direction. The chain is Polyribonucleotide nucleotidyltransferase from Agrobacterium fabrum (strain C58 / ATCC 33970) (Agrobacterium tumefaciens (strain C58)).